A 28-amino-acid polypeptide reads, in one-letter code: Venom protein (28 aa).

The disordered stretch occupies residues 1–28 (KEGYPDGQNGKKIPCAINDNISKTXEQA). A compositionally biased stretch (polar residues) spans 19–28 (DNISKTXEQA).

As to expression, expressed by the venom gland.

Its subcellular location is the secreted. Causes symptoms of mild intoxication and transient paralysis in insects (A.domestica). The polypeptide is Venom protein (Rhopalurus junceus (Caribbean blue scorpion)).